The sequence spans 245 residues: Ribonuclease 3 (245 aa).

Positions 17 to 146 constitute an RNase III domain; that stretch reads FTDKMKSLGL…FVGALYLDQG (130 aa). Glu59 contributes to the Mg(2+) binding site. The active site involves Asp63. Residues Asp132 and Glu135 each contribute to the Mg(2+) site. The active site involves Glu135. One can recognise a DRBM domain in the interval 172 to 241; sequence DFKTQFQEYV…AEQAYKLMKN (70 aa).

Belongs to the ribonuclease III family. As to quaternary structure, homodimer. Mg(2+) serves as cofactor.

The protein resides in the cytoplasm. The enzyme catalyses Endonucleolytic cleavage to 5'-phosphomonoester.. Functionally, digests double-stranded RNA. Involved in the processing of primary rRNA transcript to yield the immediate precursors to the large and small rRNAs (23S and 16S). Processes some mRNAs, and tRNAs when they are encoded in the rRNA operon. Processes pre-crRNA and tracrRNA of type II CRISPR loci if present in the organism. The polypeptide is Ribonuclease 3 (Staphylococcus epidermidis (strain ATCC 35984 / DSM 28319 / BCRC 17069 / CCUG 31568 / BM 3577 / RP62A)).